The following is a 786-amino-acid chain: MLERTLRVLEYNKVKEQLLEHTASSLGRDKVKHLVPSTDFEEIVEMQDTTDEAAKVIRLKGSAPLGGITDIRSNVKRAKIGSMLSPNELLDIANTMYGSRNMKRFIEDMVDNGVELPILETHVAQIVSLYDLEKKITNCIGDGGEVVDSASDKLRGIRTQIRTAESRIREKLENMTRSSNAQKMLSDSIVTIRNERYVIPVKQEYRGVYGGIVHDQSASGQTLFIEPQVIVELNNALQEARVKEKQEIERILLMLTEEVAVEADIVLSNVEVVANLDFIFAKAFYAKRIKATKPIVNNERYMDLRQARHPLIDPEVIVPNNIMLGKDFTTIVITGPNTGGKTVTLKTVGICVLMAQSGLHIPVMDESEICVFKNIFADIGDEQSIEQSLSTFSSHMVNIVDILEKADFESLVLFDELGAGTDPQEGAALAISILDEVCNRGARVVATTHYPELKAYGYNREQVINASVEFDVNTLSPTYKLLIGVPGRSNAFEISKRLGLSDRVIDQARNHISTDTNKIENMIAKLEESQKNAERDWNEAEALRKQSEKLHRELQRQIIEFNEERDERLLKAQKEGEEKVEAAKKEAEGIIQELRQLRKAQLANVKDHELIEAKSRLEGAAPELVKKQKVNVKNTSPKQQLRAGDEVKVLTFGQKGQLLEKVSDTEWSVQIGILKMKVKESNMEYINTPKQTEKKAVATVKGRDYHVSLELDLRGERFENAMARVEKYLDDAQLASYPRVSIIHGKGTGALRQGVQDYLKKHRGVKTFRYGDMGEGGLGVTVVELK.

ATP is bound at residue 335 to 342 (GPNTGGKT). A Smr domain is found at 711–786 (LDLRGERFEN…GLGVTVVELK (76 aa)).

This sequence belongs to the DNA mismatch repair MutS family. MutS2 subfamily. As to quaternary structure, homodimer. Binds to stalled ribosomes, contacting rRNA.

Functionally, endonuclease that is involved in the suppression of homologous recombination and thus may have a key role in the control of bacterial genetic diversity. Acts as a ribosome collision sensor, splitting the ribosome into its 2 subunits. Detects stalled/collided 70S ribosomes which it binds and splits by an ATP-hydrolysis driven conformational change. Acts upstream of the ribosome quality control system (RQC), a ribosome-associated complex that mediates the extraction of incompletely synthesized nascent chains from stalled ribosomes and their subsequent degradation. Probably generates substrates for RQC. This is Endonuclease MutS2 from Bacillus cereus (strain AH820).